The primary structure comprises 418 residues: Mitochondrial outer membrane protein SLC25A46 (418 aa).

2 positions are modified to phosphoserine: Ser32 and Ser35. The residue at position 45 (Thr45) is a Phosphothreonine. Residues 46 to 96 (PPDIPGSRNLHWGEKSPSYGVPSAPPTLEGSAEEPFPGGGEGPRPGPSSEQ) are disordered. The stretch at 96 to 187 (QLNRFAGFGI…GIISEFTPLP (92 aa)) is one Solcar 1 repeat. The next 6 membrane-spanning stretches (helical) occupy residues 103 to 123 (FGIG…CIVL), 167 to 187 (FIVQ…TPLP), 202 to 222 (HLLL…ASLI), 258 to 278 (LLPL…HYII), 314 to 334 (FPEL…LYPL), and 382 to 402 (VFGF…HATI). The stretch at 311 to 413 (DAYFPELIAN…QITKMIYSTL (103 aa)) is one Solcar 2 repeat.

The protein belongs to the mitochondrial carrier (TC 2.A.29) family. As to quaternary structure, associates with the mitochondrial contact site and cristae organizing system (MICOS) complex. May associate with the endoplasmic reticulum membrane protein complex (EMC).

Its subcellular location is the mitochondrion outer membrane. Functionally, transmembrane protein of the mitochondrial outer membrane that controls mitochondrial organization. May regulate the assembly of the MICOS (mitochondrial contact site and cristae organizing system) complex which is essential to the biogenesis and dynamics of mitochondrial cristae, the inwards folds of the inner mitochondrial membrane. Through its interaction with the EMC (endoplasmic reticulum membrane protein complex), could regulate mitochondrial lipid homeostasis and thereby mitochondrial fission. In Mus musculus (Mouse), this protein is Mitochondrial outer membrane protein SLC25A46.